A 247-amino-acid polypeptide reads, in one-letter code: uncharacterized protein (247 aa).

This is an uncharacterized protein from Cryphonectria parasitica (Chestnut blight fungus).